Reading from the N-terminus, the 1069-residue chain is Rab GTPase-activating protein 1 (1069 aa).

A disordered region spans residues 1–79 (MDDKASVGKI…DPPMDDQPGE (79 aa)). Over residues 7–22 (VGKISVSSDSVSTLNS) the composition is skewed to low complexity. Position 42 is a phosphoserine (Ser-42). The 157-residue stretch at 142–298 (EDSVVFSKLT…IFTFSVSLEI (157 aa)) folds into the PID domain. Ser-360 is subject to Phosphoserine. The tract at residues 482-527 (ERERRKTTASPSVRLPQSGSQSSVIPSPPEDDEEEDNDEPLLSGSG) is disordered. Polar residues predominate over residues 489–506 (TASPSVRLPQSGSQSSVI). A compositionally biased stretch (acidic residues) spans 510-520 (PEDDEEEDNDE). In terms of domain architecture, Rab-GAP TBC spans 566–752 (GVPEALRGEV…HIIDLLLCEG (187 aa)). A coiled-coil region spans residues 798–1047 (KKLMELACNM…ALNEVQAAKK (250 aa)). Thr-996 bears the Phosphothreonine mark.

As to quaternary structure, interacts with RAB6A and tubulin gamma.

The protein resides in the cytoplasm. The protein localises to the cytosol. It localises to the cytoskeleton. Its subcellular location is the microtubule organizing center. It is found in the centrosome. In terms of biological role, may act as a GTPase-activating protein of RAB6A. May play a role in microtubule nucleation by centrosome. May participate in a RAB6A-mediated pathway involved in the metaphase-anaphase transition. This is Rab GTPase-activating protein 1 from Pongo abelii (Sumatran orangutan).